The following is a 303-amino-acid chain: Sulfate adenylyltransferase subunit 2 (303 aa).

The protein belongs to the PAPS reductase family. CysD subfamily. As to quaternary structure, heterodimer composed of CysD, the smaller subunit, and CysN.

It catalyses the reaction sulfate + ATP + H(+) = adenosine 5'-phosphosulfate + diphosphate. Its pathway is sulfur metabolism; hydrogen sulfide biosynthesis; sulfite from sulfate: step 1/3. In terms of biological role, with CysN forms the ATP sulfurylase (ATPS) that catalyzes the adenylation of sulfate producing adenosine 5'-phosphosulfate (APS) and diphosphate, the first enzymatic step in sulfur assimilation pathway. APS synthesis involves the formation of a high-energy phosphoric-sulfuric acid anhydride bond driven by GTP hydrolysis by CysN coupled to ATP hydrolysis by CysD. The protein is Sulfate adenylyltransferase subunit 2 of Sulfurovum sp. (strain NBC37-1).